We begin with the raw amino-acid sequence, 237 residues long: 1-(5-phosphoribosyl)-5-[(5-phosphoribosylamino)methylideneamino] imidazole-4-carboxamide isomerase (237 aa).

D8 serves as the catalytic Proton acceptor. Catalysis depends on D129, which acts as the Proton donor.

It belongs to the HisA/HisF family.

The protein resides in the cytoplasm. It carries out the reaction 1-(5-phospho-beta-D-ribosyl)-5-[(5-phospho-beta-D-ribosylamino)methylideneamino]imidazole-4-carboxamide = 5-[(5-phospho-1-deoxy-D-ribulos-1-ylimino)methylamino]-1-(5-phospho-beta-D-ribosyl)imidazole-4-carboxamide. The protein operates within amino-acid biosynthesis; L-histidine biosynthesis; L-histidine from 5-phospho-alpha-D-ribose 1-diphosphate: step 4/9. This Methanosphaera stadtmanae (strain ATCC 43021 / DSM 3091 / JCM 11832 / MCB-3) protein is 1-(5-phosphoribosyl)-5-[(5-phosphoribosylamino)methylideneamino] imidazole-4-carboxamide isomerase.